A 128-amino-acid polypeptide reads, in one-letter code: Large ribosomal subunit protein bL17 (128 aa).

This sequence belongs to the bacterial ribosomal protein bL17 family. As to quaternary structure, part of the 50S ribosomal subunit. Contacts protein L32.

This Streptococcus pneumoniae serotype 2 (strain D39 / NCTC 7466) protein is Large ribosomal subunit protein bL17.